Reading from the N-terminus, the 103-residue chain is c-Myc-binding protein (103 aa).

This sequence belongs to the AMY1 family. Binds via its C-terminal region to the N-terminal region of MYC. Associates with AKAP1/S-AKAP84. Interacts with MYCBPAP. Interacts with CFAP91.

It is found in the cytoplasm. The protein resides in the nucleus. Its function is as follows. May control the transcriptional activity of MYC. Stimulates the activation of E box-dependent transcription by MYC. In Mus musculus (Mouse), this protein is c-Myc-binding protein (Mycbp).